The following is a 117-amino-acid chain: MSEKKSQEKPCSDNNQIEDPSSRPEVQVPVNYVYRILQEEQYTPCIGSTTSDFLLAMLDYLTDYILEVVGSEANINNQQNISQDRERQRDNDREPSRGFKNAPFSLFDEMPGPRRNG.

Basic and acidic residues-rich tracts occupy residues 1–11 (MSEKKSQEKPC) and 83–97 (QDRE…EPSR). Disordered stretches follow at residues 1-25 (MSEK…SRPE) and 74-117 (NINN…RRNG).

As to quaternary structure, may interact with the N-terminus of HD.

The chain is Huntingtin-interacting protein M from Mus musculus (Mouse).